A 542-amino-acid polypeptide reads, in one-letter code: MQLLVPIYKRHSNSNFKVSSCSSSPMCPVNGKLQLHDGRTAYHFQPAKFWQNDPNGPLYHNGLYHFFYQYNPHGPLWDTGKLSWGHSVSGDLVNWAFLGTAIDPTDPFDVNGCWSGSATVLLGGRPAFLYTGRDAGGVQVQNVSFAKNPLDPLLREWEKPSCNPIIAFPADVINNNFRDPTTAWLGRDGLWRMVVAAEVAGAGSALVYRSADFLRWERNAAPMHSSAAVPVLECPDFFPVAEHGIDGLDTSANGGGTGVKHVLKLSEFDTHQDFYMVGRNRRVQWLWVNEYDSKADDVAKGWAGVQAFPRKVWLDGDGKQLLQWPVDEIETLRTKRVGLQGTEVKAGGLHEIVGVASSQADVEVVFEIPNLEDEAESFDPDWLDPHKLCKDKGAASAHGGVGPFGLIVMASGDLQEQTAVFFRVFKHHGKYKVFMCTDLTRSSTKADVYKDAYGGFVDVDIQKDKSISLRTLIDHSMIESFGGGGRACITTRVYPEHAATSSSHLYVFNNGSGTVNVSKLEAWEMATATVNSADALDAITRS.

Substrate is bound by residues Trp-50–Asp-53, Gln-69, Trp-77, and Trp-114–Ser-115. Asp-53 is an active-site residue. N-linked (GlcNAc...) asparagine glycosylation occurs at Asn-142. Substrate-binding positions include Arg-178–Asp-179 and Glu-233. Cysteines 389 and 436 form a disulfide. N-linked (GlcNAc...) asparagine glycans are attached at residues Asn-510 and Asn-516.

This sequence belongs to the glycosyl hydrolase 32 family. In terms of tissue distribution, expressed in roots and leaves.

It is found in the secreted. It localises to the extracellular space. The protein resides in the apoplast. The protein localises to the cell wall. It carries out the reaction Hydrolysis of terminal non-reducing beta-D-fructofuranoside residues in beta-D-fructofuranosides.. May play a role in stress response. This is Beta-fructofuranosidase, insoluble isoenzyme 5 (CIN5) from Oryza sativa subsp. japonica (Rice).